Reading from the N-terminus, the 779-residue chain is Putative helicase V13 (779 aa).

Residues 477–642 (DNPKPFITSL…FVKEEELNEK (166 aa)) form the SF3 helicase domain. Residue 504–511 (GKSNAGKS) coordinates ATP.

The sequence is that of Putative helicase V13 from Acanthamoeba polyphaga (Amoeba).